The following is a 1437-amino-acid chain: IQ domain-containing protein N (1437 aa).

Positions 84–112 (SRAATVIQASWKGYRLRQKLISQMTAAKA) constitute an IQ 1 domain. Disordered regions lie at residues 332 to 353 (TSPTSPVIRLPAPVGPNSSLSN), 416 to 440 (SQAQTYTVSTSSKTSPSSPTVKPSP), and 848 to 878 (STGSRAKPDDRSVAQPQLHSHAPNKTMQNPR). Positions 422 to 440 (TVSTSSKTSPSSPTVKPSP) are enriched in low complexity. Positions 861-878 (AQPQLHSHAPNKTMQNPR) are enriched in polar residues. 5 IQ domains span residues 1190–1216 (QAVVTIQACARGYLVRRTVKVWHQWAT), 1217–1239 (IIQATWRGYRVRRNLERLFRATT), 1240–1258 (IIQAAWRGYCIRRARARQV), 1361–1389 (QHRACTIIQAAWKGYRTRRQLSQKQSAAK), and 1390–1413 (MVQAVWRGHYTRSCLTTDALLGTG).

As to quaternary structure, interacts with calmodulin. Expressed in testis, in elongating spermatids (at protein level).

Its function is as follows. Essential for spermiogenesis and fertilization. May be required for manchette assembly in elongating spermatids. This Mus musculus (Mouse) protein is IQ domain-containing protein N (Iqcn).